Reading from the N-terminus, the 581-residue chain is Tricyclene synthase Oc15, chloroplastic (581 aa).

The transit peptide at 1 to 68 (MAFCISYVGA…ALCLNEHSLS (68 aa)) directs the protein to the chloroplast. N-linked (GlcNAc...) asparagine glycans are attached at residues Asn-27, Asn-206, and Asn-319. The Mg(2+) site is built by Asp-338 and Asp-342. Positions 338–342 (DDIFD) match the DDXXD motif motif. 2 N-linked (GlcNAc...) asparagine glycosylation sites follow: Asn-384 and Asn-465. Residues Asn-482, Ser-486, and Glu-490 each coordinate Mg(2+). N-linked (GlcNAc...) asparagine glycosylation is present at Asn-509.

The protein belongs to the terpene synthase family. Tpsg subfamily. Mg(2+) serves as cofactor. Requires Mn(2+) as cofactor. Accumulates in flowers; mostly expressed in both upper and lower petal lobes, and, to a lower extent, in tube and stamens.

The protein resides in the plastid. Its subcellular location is the chloroplast stroma. It catalyses the reaction (2E)-geranyl diphosphate = tricyclene + diphosphate. The enzyme catalyses (2E)-geranyl diphosphate = beta-myrcene + diphosphate. It functions in the pathway secondary metabolite biosynthesis; terpenoid biosynthesis. In terms of biological role, contributes to floral scent emission. The protein is Tricyclene synthase Oc15, chloroplastic (Oc15) of Antirrhinum majus (Garden snapdragon).